A 276-amino-acid polypeptide reads, in one-letter code: Transmembrane protein 53 (276 aa).

Residues 170 to 190 (LLLLAAFALVVILFHFLLAPF) traverse the membrane as a helical segment.

Belongs to the TMEM53 family. Expressed in liver (at protein level).

It localises to the nucleus outer membrane. Its function is as follows. Negatively regulates bone morphogenetic protein (BMP) signaling in osteoblast lineage cells by blocking cytoplasm-nucleus translocation of phosphorylated SMAD1/5/9 proteins. The chain is Transmembrane protein 53 (Tmem53) from Mus musculus (Mouse).